The chain runs to 208 residues: Myosin light chain 6B (208 aa).

Residues 1–51 (MPPKKDVPVKKPAGPSISKPAAKPAAAGAPPAKTKAEPAVPQAPQKTQEPP) are disordered. Residues 10–40 (KKPAGPSISKPAAKPAAAGAPPAKTKAEPAV) are compositionally biased toward low complexity. EF-hand domains are found at residues 64-99 (DQLE…LGQN), 141-176 (GTYE…LGEK), and 176-208 (KMTE…ILSV).

As to quaternary structure, myosin is a hexamer of 2 heavy chains and 4 light chains.

Its function is as follows. Regulatory light chain of myosin. Does not bind calcium. The sequence is that of Myosin light chain 6B (MYL6B) from Homo sapiens (Human).